A 438-amino-acid chain; its full sequence is Ribosomal protein uS12 methylthiotransferase RimO (438 aa).

Residues 5–115 (PRVGFVSLGC…VMSAVHTHLP (111 aa)) form the MTTase N-terminal domain. [4Fe-4S] cluster contacts are provided by Cys-14, Cys-50, Cys-79, Cys-146, Cys-150, and Cys-153. The 238-residue stretch at 132–369 (LTPKHYAYLK…MAVQAEISAR (238 aa)) folds into the Radical SAM core domain. The TRAM domain maps to 372 to 438 (ERRVGQTLQV…SEHDLWGERR (67 aa)).

Belongs to the methylthiotransferase family. RimO subfamily. The cofactor is [4Fe-4S] cluster.

The protein localises to the cytoplasm. It catalyses the reaction L-aspartate(89)-[ribosomal protein uS12]-hydrogen + (sulfur carrier)-SH + AH2 + 2 S-adenosyl-L-methionine = 3-methylsulfanyl-L-aspartate(89)-[ribosomal protein uS12]-hydrogen + (sulfur carrier)-H + 5'-deoxyadenosine + L-methionine + A + S-adenosyl-L-homocysteine + 2 H(+). Functionally, catalyzes the methylthiolation of an aspartic acid residue of ribosomal protein uS12. The sequence is that of Ribosomal protein uS12 methylthiotransferase RimO from Chromobacterium violaceum (strain ATCC 12472 / DSM 30191 / JCM 1249 / CCUG 213 / NBRC 12614 / NCIMB 9131 / NCTC 9757 / MK).